A 222-amino-acid chain; its full sequence is Adenylate kinase (222 aa).

An ATP-binding site is contributed by 10-15 (GAGKGT). The tract at residues 30-59 (STGDMLRAAVKAGTPLGIEAKKVMDAGGLV) is NMP. Residues Thr31, Arg36, 57–59 (GLV), 85–88 (GFPR), and Gln92 each bind AMP. Positions 122–159 (GRRVHVASGRTYHVKYNPPKNEGQDDETGDPLIQRDDD) are LID. ATP contacts are provided by residues Arg123 and 132-133 (TY). Positions 135–162 (VKYNPPKNEGQDDETGDPLIQRDDDKEE) are disordered. Residues Arg156 and Arg167 each contribute to the AMP site. Residue Gly207 coordinates ATP.

It belongs to the adenylate kinase family. In terms of assembly, monomer.

The protein localises to the cytoplasm. The catalysed reaction is AMP + ATP = 2 ADP. Its pathway is purine metabolism; AMP biosynthesis via salvage pathway; AMP from ADP: step 1/1. In terms of biological role, catalyzes the reversible transfer of the terminal phosphate group between ATP and AMP. Plays an important role in cellular energy homeostasis and in adenine nucleotide metabolism. This Ralstonia nicotianae (strain ATCC BAA-1114 / GMI1000) (Ralstonia solanacearum) protein is Adenylate kinase.